The primary structure comprises 139 residues: ATP synthase epsilon chain (139 aa).

The protein belongs to the ATPase epsilon chain family. F-type ATPases have 2 components, CF(1) - the catalytic core - and CF(0) - the membrane proton channel. CF(1) has five subunits: alpha(3), beta(3), gamma(1), delta(1), epsilon(1). CF(0) has three main subunits: a, b and c.

Its subcellular location is the cell inner membrane. Functionally, produces ATP from ADP in the presence of a proton gradient across the membrane. In Pseudomonas syringae pv. tomato (strain ATCC BAA-871 / DC3000), this protein is ATP synthase epsilon chain.